A 419-amino-acid polypeptide reads, in one-letter code: Glutamyl-tRNA reductase (419 aa).

Substrate contacts are provided by residues 49–52 (TCNR), Ser107, 112–114 (EPQ), and Gln118. Cys50 serves as the catalytic Nucleophile. Residue 187–192 (GAGETI) participates in NADP(+) binding.

Belongs to the glutamyl-tRNA reductase family. As to quaternary structure, homodimer.

It catalyses the reaction (S)-4-amino-5-oxopentanoate + tRNA(Glu) + NADP(+) = L-glutamyl-tRNA(Glu) + NADPH + H(+). It participates in porphyrin-containing compound metabolism; protoporphyrin-IX biosynthesis; 5-aminolevulinate from L-glutamyl-tRNA(Glu): step 1/2. Catalyzes the NADPH-dependent reduction of glutamyl-tRNA(Glu) to glutamate 1-semialdehyde (GSA). The polypeptide is Glutamyl-tRNA reductase (Vibrio atlanticus (strain LGP32) (Vibrio splendidus (strain Mel32))).